Here is a 141-residue protein sequence, read N- to C-terminus: ATP synthase epsilon chain (141 aa).

The protein belongs to the ATPase epsilon chain family. As to quaternary structure, F-type ATPases have 2 components, CF(1) - the catalytic core - and CF(0) - the membrane proton channel. CF(1) has five subunits: alpha(3), beta(3), gamma(1), delta(1), epsilon(1). CF(0) has three main subunits: a, b and c.

It localises to the cell inner membrane. Produces ATP from ADP in the presence of a proton gradient across the membrane. The sequence is that of ATP synthase epsilon chain from Teredinibacter turnerae (strain ATCC 39867 / T7901).